The following is a 256-amino-acid chain: Phosphatidylglycerol--prolipoprotein diacylglyceryl transferase (256 aa).

3 consecutive transmembrane segments (helical) span residues 19-39 (VHWY…LGYW), 56-76 (LIFY…MLFY), and 91-111 (IWEG…AAWL). Position 139 (arginine 139) interacts with a 1,2-diacyl-sn-glycero-3-phospho-(1'-sn-glycerol). A helical membrane pass occupies residues 231–251 (FGWLTMGQVLSIPMLLIGIWL).

This sequence belongs to the Lgt family.

Its subcellular location is the cell inner membrane. The catalysed reaction is L-cysteinyl-[prolipoprotein] + a 1,2-diacyl-sn-glycero-3-phospho-(1'-sn-glycerol) = an S-1,2-diacyl-sn-glyceryl-L-cysteinyl-[prolipoprotein] + sn-glycerol 1-phosphate + H(+). The protein operates within protein modification; lipoprotein biosynthesis (diacylglyceryl transfer). Its function is as follows. Catalyzes the transfer of the diacylglyceryl group from phosphatidylglycerol to the sulfhydryl group of the N-terminal cysteine of a prolipoprotein, the first step in the formation of mature lipoproteins. This is Phosphatidylglycerol--prolipoprotein diacylglyceryl transferase from Legionella pneumophila (strain Paris).